The chain runs to 660 residues: Bifunctional polymyxin resistance protein ArnA (660 aa).

Positions 1–304 (MKAVIFAYHD…TLGLVAGARL (304 aa)) are formyltransferase ArnAFT. Catalysis depends on His-104, which acts as the Proton donor; for formyltransferase activity. (6R)-10-formyltetrahydrofolate-binding positions include Arg-114 and 136–140 (VKRAD). Residues 314–660 (RRIRVLILGV…RSVDIAERAS (347 aa)) are dehydrogenase ArnADH. Residues Asp-347 and 368–369 (DI) each bind NAD(+). UDP-alpha-D-glucuronate is bound by residues Ala-393, Tyr-398, and 432–433 (TS). The Proton acceptor; for decarboxylase activity role is filled by Glu-434. UDP-alpha-D-glucuronate-binding positions include Arg-460, Asn-492, 526 to 535 (KLIDGGQQKR), and Tyr-613. The active-site Proton donor; for decarboxylase activity is Arg-619.

The protein in the N-terminal section; belongs to the Fmt family. UDP-L-Ara4N formyltransferase subfamily. It in the C-terminal section; belongs to the NAD(P)-dependent epimerase/dehydratase family. UDP-glucuronic acid decarboxylase subfamily. In terms of assembly, homohexamer, formed by a dimer of trimers.

The enzyme catalyses UDP-alpha-D-glucuronate + NAD(+) = UDP-beta-L-threo-pentopyranos-4-ulose + CO2 + NADH. It catalyses the reaction UDP-4-amino-4-deoxy-beta-L-arabinose + (6R)-10-formyltetrahydrofolate = UDP-4-deoxy-4-formamido-beta-L-arabinose + (6S)-5,6,7,8-tetrahydrofolate + H(+). The protein operates within nucleotide-sugar biosynthesis; UDP-4-deoxy-4-formamido-beta-L-arabinose biosynthesis; UDP-4-deoxy-4-formamido-beta-L-arabinose from UDP-alpha-D-glucuronate: step 1/3. Its pathway is nucleotide-sugar biosynthesis; UDP-4-deoxy-4-formamido-beta-L-arabinose biosynthesis; UDP-4-deoxy-4-formamido-beta-L-arabinose from UDP-alpha-D-glucuronate: step 3/3. It functions in the pathway bacterial outer membrane biogenesis; lipopolysaccharide biosynthesis. Its function is as follows. Bifunctional enzyme that catalyzes the oxidative decarboxylation of UDP-glucuronic acid (UDP-GlcUA) to UDP-4-keto-arabinose (UDP-Ara4O) and the addition of a formyl group to UDP-4-amino-4-deoxy-L-arabinose (UDP-L-Ara4N) to form UDP-L-4-formamido-arabinose (UDP-L-Ara4FN). The modified arabinose is attached to lipid A and is required for resistance to polymyxin and cationic antimicrobial peptides. The polypeptide is Bifunctional polymyxin resistance protein ArnA (arnA) (Salmonella typhimurium (strain LT2 / SGSC1412 / ATCC 700720)).